Consider the following 289-residue polypeptide: Bifunctional protein FolD (289 aa).

NADP(+) is bound by residues 166-168 (GRS), S191, and I232.

This sequence belongs to the tetrahydrofolate dehydrogenase/cyclohydrolase family. In terms of assembly, homodimer.

It catalyses the reaction (6R)-5,10-methylene-5,6,7,8-tetrahydrofolate + NADP(+) = (6R)-5,10-methenyltetrahydrofolate + NADPH. The catalysed reaction is (6R)-5,10-methenyltetrahydrofolate + H2O = (6R)-10-formyltetrahydrofolate + H(+). It participates in one-carbon metabolism; tetrahydrofolate interconversion. Functionally, catalyzes the oxidation of 5,10-methylenetetrahydrofolate to 5,10-methenyltetrahydrofolate and then the hydrolysis of 5,10-methenyltetrahydrofolate to 10-formyltetrahydrofolate. The protein is Bifunctional protein FolD of Synechococcus sp. (strain JA-3-3Ab) (Cyanobacteria bacterium Yellowstone A-Prime).